A 498-amino-acid polypeptide reads, in one-letter code: Pre-glycoprotein polyprotein GP complex (498 aa).

Gly2 carries N-myristoyl glycine; by host lipidation. At 2–17 (GQIVTMFEALPHIIDE) the chain is on the extracellular side. The chain crosses the membrane as a helical span at residues 18–33 (VINIVIIVLIIITSIK). At 34–58 (AVYNFATCGILALVSFLFLAGRSCG) the chain is on the cytoplasmic side. Cys57 provides a ligand contact to Zn(2+). Residues 59–438 (MYGLNGPDIY…QGSTPLALMD (380 aa)) are Extracellular-facing. N-linked (GlcNAc...) asparagine; by host glycosylation is found at Asn85, Asn95, Asn114, Asn124, and Asn171. Cystine bridges form between Cys92/Cys239, Cys123/Cys160, Cys184/Cys220, Cys285/Cys298, Cys307/Cys316, and Cys370/Cys391. A glycan (N-linked (GlcNAc...) asparagine; by host) is linked at Asn232. Asn371, Asn396, and Asn401 each carry an N-linked (GlcNAc...) asparagine; by host glycan. Residues 439 to 459 (LLMFSTSAYLISIFLHFVRIP) form a helical membrane-spanning segment. Residues 460–498 (THRHIKGGSCPKPHRLTNKGICSCGAFKVPGVKTIWKRR) are Cytoplasmic-facing. Zn(2+) contacts are provided by His461, His463, Cys469, His473, Cys481, and Cys483.

Belongs to the arenaviridae GPC protein family. As to quaternary structure, interacts with glycoprotein G2. Part of the GP complex (GP-C) together with glycoprotein G1 and glycoprotein G2. The GP-complex interacts with protein Z, which interacts with ribonucleocapsid; these interactions may induce virion budding. In terms of assembly, homotrimer; disulfide-linked. In pre-fusion state, G1 homotrimers bind G2 homotrimers via ionic interactions. Part of the GP complex (GP-C) together with glycoprotein G2 and the stable signal peptide. Interacts with the primary host receptor DAG1 on the cell surface. The GP-complex interacts with protein Z, which interacts with ribonucleocapsid; these interactions may induce virion budding. Homotrimer. Interacts with the stable signal peptide. In pre-fusion state, G2 homotrimers bind G1 homotrimers via ionic interactions. Part of the GP complex (GP-C) together with glycoprotein G1 and the stable signal peptide. Acidification in the endosome triggers rearrangements, which ultimately leads to a 6 helix bundle formed by the two heptad repeat domains (HR1 and HR2) in post-fusion state. The GP-complex interacts with protein Z, which interacts with ribonucleocapsid; these interactions may induce virion budding. Post-translationally, specific enzymatic cleavages in vivo yield mature proteins. GP-C polyprotein is cleaved in the endoplasmic reticulum by the host protease MBTPS1. Only cleaved glycoprotein is incorporated into virions. The SSP remains stably associated with the GP complex following cleavage by signal peptidase and plays crucial roles in the trafficking of GP through the secretory pathway. In terms of processing, myristoylation is necessary for GP2-mediated fusion activity.

It is found in the virion membrane. Its subcellular location is the host endoplasmic reticulum membrane. It localises to the host Golgi apparatus membrane. The protein resides in the host cell membrane. Functionally, functions as a cleaved signal peptide that is retained as the third component of the GP complex (GP-C). Helps to stabilize the spike complex in its native conformation. The SSP is required for efficient glycoprotein expression, post-translational maturation cleavage of G1 and G2, glycoprotein transport to the cell surface plasma membrane, formation of infectious virus particles, and acid pH-dependent glycoprotein-mediated cell fusion. Its function is as follows. Forms the virion spikes together with glycoprotein G2. The glycoprotein spike trimers are connected to the underlying matrix. Interacts with the host receptor. Mediates virus attachment to the host primary receptor alpha-dystroglycan DAG1 (alpha-DG) at the cell surface. Down-modulates host DAG1. Forms the virion spikes together with glycoprotein G1. The glycoprotein spike trimers are connected to the underlying matrix. Class I viral fusion protein that directs fusion of viral and host endosomal membranes, leading to delivery of the nucleocapsid into the cytoplasm. Membrane fusion is mediated by irreversible conformational changes induced by acidification. The polypeptide is Pre-glycoprotein polyprotein GP complex (Homo sapiens (Human)).